Here is a 258-residue protein sequence, read N- to C-terminus: Thiazole synthase (258 aa).

Lys-98 (schiff-base intermediate with DXP) is an active-site residue. 1-deoxy-D-xylulose 5-phosphate contacts are provided by residues Gly-159, 185-186, and 207-208; these read AG and NT.

It belongs to the ThiG family. In terms of assembly, homotetramer. Forms heterodimers with either ThiH or ThiS.

It is found in the cytoplasm. The enzyme catalyses [ThiS sulfur-carrier protein]-C-terminal-Gly-aminoethanethioate + 2-iminoacetate + 1-deoxy-D-xylulose 5-phosphate = [ThiS sulfur-carrier protein]-C-terminal Gly-Gly + 2-[(2R,5Z)-2-carboxy-4-methylthiazol-5(2H)-ylidene]ethyl phosphate + 2 H2O + H(+). Its pathway is cofactor biosynthesis; thiamine diphosphate biosynthesis. Functionally, catalyzes the rearrangement of 1-deoxy-D-xylulose 5-phosphate (DXP) to produce the thiazole phosphate moiety of thiamine. Sulfur is provided by the thiocarboxylate moiety of the carrier protein ThiS. In vitro, sulfur can be provided by H(2)S. The protein is Thiazole synthase of Bacillus cereus (strain ZK / E33L).